A 257-amino-acid polypeptide reads, in one-letter code: MAPITDEAVNGLKDMIGKLEARVQELEGRLVGDLKPKSTAEQMRIILMGPPGAGKGTQAPRLKEKYCVCHLATGDMLRSQVAKKTELGKEAKKIMDQGGLVSDEIMVNMIKSELETNSECKNGFILDGFPRTVAQAERLDDMLEARKQKLQHAVELQIDDALLVARITGRLVHPASGRSYHKIFNPPKNEMLDDITGEPLIQRSDDNAETLKKRLSTYHAQTAPVVDYYKKTGIWRGIDASQEPGQVWKSLLGVFQK.

Residue 52–57 (GAGKGT) participates in ATP binding. The interval 72 to 101 (ATGDMLRSQVAKKTELGKEAKKIMDQGGLV) is NMP. AMP-binding positions include T73, R78, 99–101 (GLV), 128–131 (GFPR), and Q135. Residues 169 to 206 (GRLVHPASGRSYHKIFNPPKNEMLDDITGEPLIQRSDD) are LID. ATP-binding positions include R170 and 179 to 180 (SY). AMP-binding residues include R203 and R214. An ATP-binding site is contributed by Q242.

The protein belongs to the adenylate kinase family. AK2 subfamily. In terms of assembly, monomer.

The protein localises to the cytoplasm. The protein resides in the cytosol. Its subcellular location is the mitochondrion intermembrane space. It catalyses the reaction AMP + ATP = 2 ADP. Functionally, catalyzes the reversible transfer of the terminal phosphate group between ATP and AMP. Plays an important role in cellular energy homeostasis and in adenine nucleotide metabolism. Adenylate kinase activity is critical for regulation of the phosphate utilization and the AMP de novo biosynthesis pathways. This Aspergillus clavatus (strain ATCC 1007 / CBS 513.65 / DSM 816 / NCTC 3887 / NRRL 1 / QM 1276 / 107) protein is Adenylate kinase (adk1).